The primary structure comprises 124 residues: Small ribosomal subunit protein uS12 (124 aa).

3-methylthioaspartic acid is present on D89.

The protein belongs to the universal ribosomal protein uS12 family. In terms of assembly, part of the 30S ribosomal subunit. Contacts proteins S8 and S17. May interact with IF1 in the 30S initiation complex.

With S4 and S5 plays an important role in translational accuracy. Functionally, interacts with and stabilizes bases of the 16S rRNA that are involved in tRNA selection in the A site and with the mRNA backbone. Located at the interface of the 30S and 50S subunits, it traverses the body of the 30S subunit contacting proteins on the other side and probably holding the rRNA structure together. The combined cluster of proteins S8, S12 and S17 appears to hold together the shoulder and platform of the 30S subunit. This is Small ribosomal subunit protein uS12 from Yersinia pestis (strain Pestoides F).